The primary structure comprises 1908 residues: Putative ankyrin repeat protein L484 (1908 aa).

5 ANK repeats span residues aspartate 20–isoleucine 50, proline 60–leucine 97, aspartate 101–arginine 130, serine 134–lysine 167, and aspartate 1370–threonine 1399. Residues valine 1539–lysine 1603 are a coiled coil.

Its subcellular location is the virion. This is Putative ankyrin repeat protein L484 from Acanthamoeba polyphaga mimivirus (APMV).